Here is a 351-residue protein sequence, read N- to C-terminus: Phosphoribosylformylglycinamidine cyclo-ligase (351 aa).

It belongs to the AIR synthase family.

It localises to the cytoplasm. The catalysed reaction is 2-formamido-N(1)-(5-O-phospho-beta-D-ribosyl)acetamidine + ATP = 5-amino-1-(5-phospho-beta-D-ribosyl)imidazole + ADP + phosphate + H(+). Its pathway is purine metabolism; IMP biosynthesis via de novo pathway; 5-amino-1-(5-phospho-D-ribosyl)imidazole from N(2)-formyl-N(1)-(5-phospho-D-ribosyl)glycinamide: step 2/2. This is Phosphoribosylformylglycinamidine cyclo-ligase from Burkholderia mallei (strain NCTC 10247).